We begin with the raw amino-acid sequence, 638 residues long: ATP-dependent zinc metalloprotease FtsH (638 aa).

Residues 1–7 are Cytoplasmic-facing; that stretch reads MRSTYKT. A helical transmembrane segment spans residues 8–28; the sequence is IGLWVILIVLFVAFYNFFSQG. At 29 to 102 the chain is on the periplasmic side; that stretch reads NDQVQEPSFT…KYEREEQNSL (74 aa). The chain crosses the membrane as a helical span at residues 103 to 123; the sequence is WLTILGQWMPVVFLFLFFIFF. The Cytoplasmic portion of the chain corresponds to 124–638; sequence MRQLQGGSGK…GLPAMEPKKA (515 aa). An ATP-binding site is contributed by 195 to 202; that stretch reads GSPGTGKT. A Zn(2+)-binding site is contributed by His-417. Glu-418 is a catalytic residue. Zn(2+) is bound by residues His-421 and Asp-493. The tract at residues 596–638 is disordered; that stretch reads GGQLTRERPPPRVNAPPKATEKKDKRKILDALEGLPAMEPKKA. The segment covering 614-625 has biased composition (basic and acidic residues); that stretch reads ATEKKDKRKILD.

It in the central section; belongs to the AAA ATPase family. The protein in the C-terminal section; belongs to the peptidase M41 family. Homohexamer. Zn(2+) is required as a cofactor.

Its subcellular location is the cell inner membrane. Acts as a processive, ATP-dependent zinc metallopeptidase for both cytoplasmic and membrane proteins. Plays a role in the quality control of integral membrane proteins. This chain is ATP-dependent zinc metalloprotease FtsH, found in Myxococcus xanthus (strain DK1622).